Reading from the N-terminus, the 557-residue chain is Formate--tetrahydrofolate ligase (557 aa).

67–74 is a binding site for ATP; sequence TPAGEGKT.

The protein belongs to the formate--tetrahydrofolate ligase family.

It carries out the reaction (6S)-5,6,7,8-tetrahydrofolate + formate + ATP = (6R)-10-formyltetrahydrofolate + ADP + phosphate. The protein operates within one-carbon metabolism; tetrahydrofolate interconversion. This Cereibacter sphaeroides (strain KD131 / KCTC 12085) (Rhodobacter sphaeroides) protein is Formate--tetrahydrofolate ligase.